The following is a 620-amino-acid chain: MSFDIAKYPTLALVDSTQELRLLPKESLPKLCDELRRYLLDSVSRSSGHFASGLGTVELTVALHYVYNTPFDQLIWDVGHQAYPHKILTGRRDKIGTIRQKGGLHPFPWRGESEYDVLSVGHSSTSISAGIGIAVAAEKEGKDRRTVCVIGDGAITAGMAFEAMNHAGDIRPDMLVILNDNEMSISENVGALNNHLAQLLSGKLYSSLREGGKKVFSGVPPIKELLKRTEEHIKGMVVPGTLFEELGFNYIGPVDGHDVMGLISTLKNMRDLKGPQFLHIMTKKGRGYEPAEKDPITFHAVPKFDPSSGCLPKSSGGLPGYSKIFGDWLCETAAKDSKLMAITPAMREGSGMVEFSRKFPDRYFDVAIAEQHAVTFAAGLAIGGYKPVVAIYSTFLQRAYDQVIHDVAIQKLPVMFAIDRAGIVGADGQTHQGAFDLSYLRCIPDMVIMTPSDENECRQMLLTGYHYNDGPTAVRYPRGNAQGVALTPLEKLPIGKGLVKRHGEKLAILNFGTLMPEAAKVAEALNATLVDMRFVKPLDDTLILEMAAQHDALVTLEENAIMGGAGSGVNEVLMAHRKPVPVLNIGLPDFFIPQGTQEEARAELGLDAAGIEAKIKAWLA.

Thiamine diphosphate contacts are provided by residues histidine 80 and 121 to 123; that span reads GHS. A Mg(2+)-binding site is contributed by aspartate 152. Residues 153 to 154, asparagine 181, tyrosine 288, and glutamate 370 contribute to the thiamine diphosphate site; that span reads GA. Asparagine 181 serves as a coordination point for Mg(2+).

This sequence belongs to the transketolase family. DXPS subfamily. In terms of assembly, homodimer. Mg(2+) is required as a cofactor. Requires thiamine diphosphate as cofactor.

It catalyses the reaction D-glyceraldehyde 3-phosphate + pyruvate + H(+) = 1-deoxy-D-xylulose 5-phosphate + CO2. The protein operates within metabolic intermediate biosynthesis; 1-deoxy-D-xylulose 5-phosphate biosynthesis; 1-deoxy-D-xylulose 5-phosphate from D-glyceraldehyde 3-phosphate and pyruvate: step 1/1. Its function is as follows. Catalyzes the acyloin condensation reaction between C atoms 2 and 3 of pyruvate and glyceraldehyde 3-phosphate to yield 1-deoxy-D-xylulose-5-phosphate (DXP). This is 1-deoxy-D-xylulose-5-phosphate synthase from Salmonella heidelberg (strain SL476).